The primary structure comprises 451 residues: UPF0210 protein NMA1908 (451 aa).

The protein belongs to the UPF0210 family. Homodimer.

In Neisseria meningitidis serogroup A / serotype 4A (strain DSM 15465 / Z2491), this protein is UPF0210 protein NMA1908.